A 535-amino-acid chain; its full sequence is Alpha-1,3-mannosyl-glycoprotein 4-beta-N-acetylglucosaminyltransferase A (535 aa).

The Cytoplasmic segment spans residues 1 to 4; sequence MRLR. Residues 5–27 form a helical; Signal-anchor for type II membrane protein membrane-spanning segment; the sequence is NGTVATALAFITSFLTLSWYTTW. Positions 28–63 form a coiled coil; sequence QNGKEKLIAYQREFLALKERLRIAEHRISQRSSELN. Topologically, residues 28–535 are lumenal; the sequence is QNGKEKLIAY…NEIHIKKATN (508 aa). N-linked (GlcNAc...) asparagine glycosylation is found at Asn-77 and Asn-458. The residue at position 474 (Ser-474) is a Phosphoserine.

Belongs to the glycosyltransferase 54 family. The cofactor is a divalent metal cation. N-glycosylated.

The protein localises to the golgi apparatus membrane. The protein resides in the secreted. It catalyses the reaction N(4)-{beta-D-GlcNAc-(1-&gt;2)-alpha-D-Man-(1-&gt;3)-[beta-D-GlcNAc-(1-&gt;2)-alpha-D-Man-(1-&gt;6)]-beta-D-Man-(1-&gt;4)-beta-D-GlcNAc-(1-&gt;4)-beta-D-GlcNAc}-L-asparaginyl-[protein] + UDP-N-acetyl-alpha-D-glucosamine = N(4)-{beta-D-GlcNAc-(1-&gt;2)-[beta-D-GlcNAc-(1-&gt;4)]-alpha-D-Man-(1-&gt;3)-[beta-D-GlcNAc-(1-&gt;2)-alpha-D-Man-(1-&gt;6)]-beta-D-Man-(1-&gt;4)-beta-D-GlcNAc-(1-&gt;4)-beta-D-GlcNAc}-L-asparaginyl-[protein] + UDP + H(+). It carries out the reaction an N(4)-{beta-D-GlcNAc-(1-&gt;2)-alpha-D-Man-(1-&gt;3)-[alpha-D-Man-(1-&gt;6)]-beta-D-Man-(1-&gt;4)-beta-D-GlcNAc-(1-&gt;4)-beta-D-GlcNAc}-L-asparaginyl-[protein] + UDP-N-acetyl-alpha-D-glucosamine = an N(4)-{beta-D-GlcNAc-(1-&gt;2)-[beta-D-GlcNAc-(1-&gt;4)]-alpha-D-Man-(1-&gt;3)-[alpha-D-Man-(1-&gt;6)]-beta-D-Man-(1-&gt;4)-beta-D-GlcNAc-(1-&gt;4)-beta-D-GlcNAc}-L-asparaginyl-[protein] + UDP + H(+). The enzyme catalyses an N(4)-{beta-D-GlcNAc-(1-&gt;2)-alpha-D-Man-(1-&gt;3)-[beta-D-GlcNAc-(1-&gt;2)-[beta-D-GlcNAc-(1-&gt;6)]-alpha-D-Man-(1-&gt;6)]-beta-D-Man-(1-&gt;4)-beta-D-GlcNAc-(1-&gt;4)-beta-D-GlcNAc}-L-asparaginyl-[protein] + UDP-N-acetyl-alpha-D-glucosamine = an N(4)-{beta-D-GlcNAc-(1-&gt;2)-[beta-D-GlcNAc-(1-&gt;4)]-alpha-D-Man-(1-&gt;3)-[beta-D-GlcNAc-(1-&gt;2)-[beta-D-GlcNAc-(1-&gt;6)]-alpha-D-Man-(1-&gt;6)]-beta-D-Man-(1-&gt;4)-beta-D-GlcNAc-(1-&gt;4)-beta-D-GlcNAc}-L-asparaginyl-[protein] + UDP + H(+). The catalysed reaction is an N(4)-{beta-D-GlcNAc-(1-&gt;2)-alpha-D-Man-(1-&gt;3)-[beta-D-GlcNAc-(1-&gt;2)-alpha-D-Man-(1-&gt;6)]-beta-D-Man-(1-&gt;4)-beta-D-GlcNAc-(1-&gt;4)-[alpha-L-Fuc-(1-&gt;6)]-beta-D-GlcNAc}-L-asparaginyl-[protein] + UDP-N-acetyl-alpha-D-glucosamine = N(4)-{beta-D-GlcNAc-(1-&gt;2)-[beta-D-GlcNAc-(1-&gt;4)]-alpha-D-Man-(1-&gt;3)-[beta-D-GlcNAc-(1-&gt;2)-alpha-D-Man-(1-&gt;6)]-beta-D-Man-(1-&gt;4)-beta-D-GlcNAc-(1-&gt;4)-[alpha-L-Fuc-(1-&gt;6)]-beta-D-GlcNAc}-asparaginyl-[protein] + UDP + H(+). It catalyses the reaction an N(4)-{beta-D-GlcNAc-(1-&gt;2)-alpha-D-Man-(1-&gt;3)-[beta-D-Gal-(1-&gt;4)-beta-D-GlcNAc-(1-&gt;2)-alpha-D-Man-(1-&gt;6)]-beta-D-Man-(1-&gt;4)-beta-D-GlcNAc-(1-&gt;4)-beta-D-GlcNAc}-L-asparaginyl-[protein] + UDP-N-acetyl-alpha-D-glucosamine = an N(4)-{beta-D-GlcNAc-(1-&gt;2)-[beta-D-GlcNAc-(1-&gt;4)]-alpha-D-Man-(1-&gt;3)-[beta-D-Gal-(1-&gt;4)-beta-D-GlcNAc-(1-&gt;2)-alpha-D-Man-(1-&gt;6)]-beta-D-Man-(1-&gt;4)-beta-D-GlcNAc-(1-&gt;4)-beta-D-GlcNAc}-L-asparaginyl-[protein] + UDP + H(+). It carries out the reaction N(4)-{beta-D-GlcNAc-(1-&gt;2)-alpha-D-Man-(1-&gt;3)-[alpha-D-Man-(1-&gt;3)-{alpha-D-Man-(1-&gt;6)}-alpha-D-Man-(1-&gt;6)]-beta-D-Man-(1-&gt;4)-beta-D-GlcNAc-(1-&gt;4)-beta-D-GlcNAc}-asparaginyl-[protein] + UDP-N-acetyl-alpha-D-glucosamine = N(4)-{beta-D-GlcNAc-(1-&gt;2)-[beta-D-GlcNAc-(1-&gt;4)]-alpha-D-Man-(1-&gt;3)-[alpha-D-Man-(1-&gt;3)-{alpha-D-Man-(1-&gt;6)}-alpha-D-Man-(1-&gt;6)]-beta-D-Man-(1-&gt;4)-beta-D-GlcNAc-(1-&gt;4)-beta-D-GlcNAc}-asparaginyl-[protein] + UDP + H(+). The enzyme catalyses N(4)-{beta-D-GlcNAc-(1-&gt;2)-alpha-D-Man-(1-&gt;3)-beta-D-Man-(1-&gt;4)-beta-D-GlcNAc-(1-&gt;4)-beta-D-GlcNAc}-asparaginyl-[protein] + UDP-N-acetyl-alpha-D-glucosamine = N(4)-{beta-D-GlcNAc-(1-&gt;2)-[beta-D-GlcNAc-(1-&gt;4)]-alpha-D-Man-(1-&gt;3)-beta-D-Man-(1-&gt;4)-beta-D-GlcNAc-(1-&gt;4)-beta-D-GlcNAc}-asparaginyl-[protein] + UDP + H(+). It functions in the pathway protein modification; protein glycosylation. With respect to regulation, inhibited by UDP. Its function is as follows. Glycosyltransferase that catalyze the transfer of GlcNAc from UDP-GlcNAc to the GlcNAcbeta1-2Manalpha1-3 arm of the core structure of N-linked glycans through a beta1-4 linkage and participates in the production of tri- and tetra-antennary N-linked sugar chains. Involved in glucose transport by mediating SLC2A2/GLUT2 glycosylation, thereby controlling cell-surface expression of SLC2A2 in pancreatic beta cells. The polypeptide is Alpha-1,3-mannosyl-glycoprotein 4-beta-N-acetylglucosaminyltransferase A (Pongo abelii (Sumatran orangutan)).